The sequence spans 303 residues: Probable WRKY transcription factor 30 (303 aa).

A disordered region spans residues 65 to 92 (DQVSQGGGSPKSDDSDQEPLVIKSSKKS). The WRKY DNA-binding region spans 107–175 (GVDRTLDDGF…YRGIHSCSQA (69 aa)). A compositionally biased stretch (low complexity) spans 266 to 278 (SGSASHSASNSPS). The segment at 266–291 (SGSASHSASNSPSTVPLESPFESYDP) is disordered.

Belongs to the WRKY group III family. Interacts with WRKY53, WRKY54 and WRKY70.

It localises to the nucleus. In terms of biological role, transcription factor. Interacts specifically with the W box (5'-(T)TGAC[CT]-3'), a frequently occurring elicitor-responsive cis-acting element. The sequence is that of Probable WRKY transcription factor 30 from Arabidopsis thaliana (Mouse-ear cress).